The primary structure comprises 501 residues: Phenylalanine--tRNA ligase alpha subunit (501 aa).

Residues Thr-344, 383 to 385, and Phe-424 contribute to the L-phenylalanine site; that span reads QID. Glu-426 is a binding site for Mg(2+). Phe-449 is an L-phenylalanine binding site.

This sequence belongs to the class-II aminoacyl-tRNA synthetase family. Phe-tRNA synthetase alpha subunit type 2 subfamily. In terms of assembly, tetramer of two alpha and two beta subunits. The cofactor is Mg(2+).

The protein resides in the cytoplasm. The enzyme catalyses tRNA(Phe) + L-phenylalanine + ATP = L-phenylalanyl-tRNA(Phe) + AMP + diphosphate + H(+). This chain is Phenylalanine--tRNA ligase alpha subunit, found in Thermococcus kodakarensis (strain ATCC BAA-918 / JCM 12380 / KOD1) (Pyrococcus kodakaraensis (strain KOD1)).